Here is a 130-residue protein sequence, read N- to C-terminus: Small ribosomal subunit protein uS9 (130 aa).

The interval 98–130 (LKRAGMLTRDPRMKERKKPGLKGARRSPQFSKR) is disordered. The span at 111-130 (KERKKPGLKGARRSPQFSKR) shows a compositional bias: basic residues.

This sequence belongs to the universal ribosomal protein uS9 family.

This is Small ribosomal subunit protein uS9 from Macrococcus caseolyticus (strain JCSC5402) (Macrococcoides caseolyticum).